A 63-amino-acid polypeptide reads, in one-letter code: Sperm protamine P1 (63 aa).

Positions 1-63 (MARYRRHSRS…RYSRRGRRRY (63 aa)) are disordered.

This sequence belongs to the protamine P1 family. As to expression, testis.

It localises to the nucleus. The protein localises to the chromosome. Its function is as follows. Protamines substitute for histones in the chromatin of sperm during the haploid phase of spermatogenesis. They compact sperm DNA into a highly condensed, stable and inactive complex. This chain is Sperm protamine P1 (PRM1), found in Pseudantechinus macdonnellensis (Fat-tailed marsupial mouse).